A 747-amino-acid polypeptide reads, in one-letter code: Protein neuralized (747 aa).

The NHR 1 domain occupies 97–251 (PLQFHTVHGD…NCTGIEFLDA (155 aa)). Residues 280 to 292 (LPQQQQQLPQQQL) show a composition bias toward low complexity. Residues 280-309 (LPQQQQQLPQQQLTAHHPLQQSRRSLPGGT) form a disordered region. In terms of domain architecture, NHR 2 spans 359 to 514 (PVPFHITKGR…STQSLRMFRQ (156 aa)). The RING-type zinc-finger motif lies at 694–735 (CTICYENPIDSVLYMCGHMCMCYDCAIEQWRGVGGGQCPLCR).

Its subcellular location is the nucleus. Functionally, involved in neurogenesis. Interacts with other neurogenic proteins in the specification of the neuroblast versus epidermoblast cell fate. The polypeptide is Protein neuralized (neur) (Drosophila virilis (Fruit fly)).